We begin with the raw amino-acid sequence, 205 residues long: Holliday junction branch migration complex subunit RuvA (205 aa).

Positions 1–64 (MIGRLRGVLI…EDAQLLYGFI (64 aa)) are domain I. Residues 65 to 143 (TKQERSLFRL…SLMEASVGSE (79 aa)) are domain II. A flexible linker region spans residues 144–156 (REFVLQSNYSPAP). The domain III stretch occupies residues 157 to 205 (TVNSAEEDAISALISLGYKPPQASKAVSAAYKEGMDSETLIKAALKSML).

Belongs to the RuvA family. As to quaternary structure, homotetramer. Forms an RuvA(8)-RuvB(12)-Holliday junction (HJ) complex. HJ DNA is sandwiched between 2 RuvA tetramers; dsDNA enters through RuvA and exits via RuvB. An RuvB hexamer assembles on each DNA strand where it exits the tetramer. Each RuvB hexamer is contacted by two RuvA subunits (via domain III) on 2 adjacent RuvB subunits; this complex drives branch migration. In the full resolvosome a probable DNA-RuvA(4)-RuvB(12)-RuvC(2) complex forms which resolves the HJ.

The protein localises to the cytoplasm. Functionally, the RuvA-RuvB-RuvC complex processes Holliday junction (HJ) DNA during genetic recombination and DNA repair, while the RuvA-RuvB complex plays an important role in the rescue of blocked DNA replication forks via replication fork reversal (RFR). RuvA specifically binds to HJ cruciform DNA, conferring on it an open structure. The RuvB hexamer acts as an ATP-dependent pump, pulling dsDNA into and through the RuvAB complex. HJ branch migration allows RuvC to scan DNA until it finds its consensus sequence, where it cleaves and resolves the cruciform DNA. In Shewanella sp. (strain MR-7), this protein is Holliday junction branch migration complex subunit RuvA.